A 187-amino-acid chain; its full sequence is Peptide deformylase 2 (187 aa).

Residues cysteine 107 and histidine 149 each contribute to the Fe cation site. The active site involves glutamate 150. Histidine 153 is a binding site for Fe cation.

Belongs to the polypeptide deformylase family. The cofactor is Fe(2+).

It carries out the reaction N-terminal N-formyl-L-methionyl-[peptide] + H2O = N-terminal L-methionyl-[peptide] + formate. Its function is as follows. Removes the formyl group from the N-terminal Met of newly synthesized proteins. Requires at least a dipeptide for an efficient rate of reaction. N-terminal L-methionine is a prerequisite for activity but the enzyme has broad specificity at other positions. This Gloeobacter violaceus (strain ATCC 29082 / PCC 7421) protein is Peptide deformylase 2.